Consider the following 777-residue polypeptide: Glucocorticoid receptor (777 aa).

The segment covering 1–14 has biased composition (basic and acidic residues); the sequence is MDSKESLTPGKEEN. Residues 1-23 form a disordered region; sequence MDSKESLTPGKEENPSSVLTQER. The segment at 1–420 is modulating; that stretch reads MDSKESLTPG…TATTGPPPKL (420 aa). Phosphothreonine is present on T8. R23 is modified (omega-N-methylarginine). S45, S113, S134, and S141 each carry phosphoserine. The interval 130–182 is disordered; it reads NRSTSVPENPKSSASSSVSAAPKEKEFPKTHSDVSSEQQNLKGQTGTNGGNVK. Over residues 134 to 150 the composition is skewed to low complexity; it reads SVPENPKSSASSSVSAA. Residues 151–163 are compositionally biased toward basic and acidic residues; sequence PKEKEFPKTHSDV. Polar residues predominate over residues 164–174; sequence SSEQQNLKGQT. 3 positions are modified to phosphoserine: S203, S211, and S226. K258 is covalently cross-linked (Glycyl lysine isopeptide (Lys-Gly) (interchain with G-Cter in SUMO2)). S267 bears the Phosphoserine mark. Residues K277 and K293 each participate in a glycyl lysine isopeptide (Lys-Gly) (interchain with G-Cter in SUMO); alternate cross-link. Residues K277 and K293 each participate in a glycyl lysine isopeptide (Lys-Gly) (interchain with G-Cter in SUMO2); alternate cross-link. Over residues 394 to 414 the composition is skewed to low complexity; it reads SSPSMRPDVSSPPSSSSTATT. Positions 394–415 are disordered; that stretch reads SSPSMRPDVSSPPSSSSTATTG. Residue S404 is modified to Phosphoserine. K419 participates in a covalent cross-link: Glycyl lysine isopeptide (Lys-Gly) (interchain with G-Cter in ubiquitin). 2 consecutive NR C4-type zinc fingers follow at residues 421–441 and 457–481; these read CLVCSDEASGCHYGVLTCGSC and CAGRNDCIIDKIRRKNCPACRYRKC. A DNA-binding region (nuclear receptor) is located at residues 421-486; sequence CLVCSDEASG…RYRKCLQAGM (66 aa). Residues K480, K492, K494, and K495 each carry the N6-acetyllysine modification. Positions 485–777 are interaction with CLOCK; it reads GMNLEARKTK…NIKKLLFHQK (293 aa). The interval 487 to 523 is hinge; it reads NLEARKTKKKIKGIQQATTGVSQETSENPANKTIVPA. One can recognise an NR LBD domain in the interval 524-758; the sequence is TLPQLTPTLV…FPEMLAEIIT (235 aa). The tract at residues 532-697 is interaction with CRY1; that stretch reads LVSLLEVIEP…EIRMTYIKEL (166 aa). A Glycyl lysine isopeptide (Lys-Gly) (interchain with G-Cter in SUMO) cross-link involves residue K703.

It belongs to the nuclear hormone receptor family. NR3 subfamily. Heteromultimeric cytoplasmic complex with HSP90AA1, HSPA1A/HSPA1B, and FKBP5 or another immunophilin such as PPID, STIP1, or the immunophilin homolog PPP5C. Upon ligand binding FKBP5 dissociates from the complex and FKBP4 takes its place, thereby linking the complex to dynein and mediating transport to the nucleus, where the complex dissociates. Probably forms a complex composed of chaperones HSP90 and HSP70, co-chaperones CDC37, PPP5C, TSC1 and client protein TSC2, CDK4, AKT, RAF1 and NR3C1; this complex does not contain co-chaperones STIP1/HOP and PTGES3/p23. Directly interacts with UNC45A. Binds to DNA as a homodimer, and as heterodimer with NR3C2 or the retinoid X receptor. Binds STAT5A and STAT5B homodimers and heterodimers. Interacts with NRIP1, POU2F1, POU2F2 and TRIM28. Interacts with several coactivator complexes, including the SMARCA4 complex, CREBBP/EP300, TADA2L (Ada complex) and p160 coactivators such as NCOA2 and NCOA6. Interaction with BAG1 inhibits transactivation. Interacts with HEXIM1 and TGFB1I1. Interacts with NCOA1. Interacts with NCOA3, SMARCA4, SMARCC1, SMARCD1, and SMARCE1. Interacts with CLOCK, CRY1 and CRY2 in a ligand-dependent fashion. Interacts with CIART. Interacts with RWDD3. Interacts with UBE2I/UBC9 and this interaction is enhanced in the presence of RWDD3. Interacts with GRIP1. Interacts with NR4A3 (via nuclear receptor DNA-binding domain), represses transcription activity of NR4A3 on the POMC promoter Nur response element (NurRE). Directly interacts with PNRC2 to attract and form a complex with UPF1 and DCP1A; the interaction leads to rapid mRNA degradation. Interacts with GSK3B. Interacts with FNIP1 and FNIP2. Interacts (via C-terminus) with HNRNPU (via C-terminus). Interacts with MCM3AP. Interacts (via domain NR LBD) with HSP90AA1 and HSP90AB1. In the absence of hormonal ligand, interacts with TACC1. Interacts (via NR LBD domain) with ZNF764 (via KRAB domain); the interaction regulates transcription factor activity of NR3C1 by directing its actions toward certain biologic pathways. Acetylation by CLOCK reduces its binding to glucocorticoid response elements and its transcriptional activity. Post-translationally, increased proteasome-mediated degradation in response to glucocorticoids. In terms of processing, phosphorylated in the absence of hormone; becomes hyperphosphorylated in the presence of glucocorticoid. The Ser-203, Ser-226 and Ser-404-phosphorylated forms are mainly cytoplasmic, and the Ser-211-phosphorylated form is nuclear. Phosphorylation at Ser-211 increases transcriptional activity. Phosphorylation at Ser-203, Ser-226 and Ser-404 decreases signaling capacity. Phosphorylation at Ser-404 may protect from glucocorticoid-induced apoptosis. Phosphorylation at Ser-203 and Ser-211 is not required in regulation of chromosome segregation. May be dephosphorylated by PPP5C, attenuates NR3C1 action. Ubiquitinated by UBR5, leading to its degradation: UBR5 specifically recognizes and binds ligand-bound NR3C1 when it is not associated with coactivators (NCOAs). In presence of NCOAs, the UBR5-degron is not accessible, preventing its ubiquitination and degradation. Post-translationally, sumoylation at Lys-277 and Lys-293 negatively regulates its transcriptional activity. Sumoylation at Lys-703 positively regulates its transcriptional activity in the presence of RWDD3. Sumoylation at Lys-277 and Lys-293 is dispensable whereas sumoylation at Lys-703 is critical for the stimulatory effect of RWDD3 on its transcriptional activity. Heat shock increases sumoylation in a RWWD3-dependent manner.

Its subcellular location is the cytoplasm. It localises to the nucleus. It is found in the mitochondrion. The protein localises to the cytoskeleton. The protein resides in the spindle. Its subcellular location is the microtubule organizing center. It localises to the centrosome. It is found in the chromosome. The protein localises to the nucleoplasm. Functionally, receptor for glucocorticoids (GC). Has a dual mode of action: as a transcription factor that binds to glucocorticoid response elements (GRE), both for nuclear and mitochondrial DNA, and as a modulator of other transcription factors. Affects inflammatory responses, cellular proliferation and differentiation in target tissues. Involved in chromatin remodeling. Plays a role in rapid mRNA degradation by binding to the 5' UTR of target mRNAs and interacting with PNRC2 in a ligand-dependent manner which recruits the RNA helicase UPF1 and the mRNA-decapping enzyme DCP1A, leading to RNA decay. Could act as a coactivator for STAT5-dependent transcription upon growth hormone (GH) stimulation and could reveal an essential role of hepatic GR in the control of body growth. Mediates glucocorticoid-induced apoptosis. Promotes accurate chromosome segregation during mitosis. May act as a tumor suppressor. May play a negative role in adipogenesis through the regulation of lipolytic and antilipogenic gene expression. This Aotus nancymaae (Ma's night monkey) protein is Glucocorticoid receptor (NR3C1).